A 361-amino-acid chain; its full sequence is NudC domain-containing protein 3 (361 aa).

The segment covering 87–97 (KIRRKEEEEAK) has biased composition (basic and acidic residues). Disordered regions lie at residues 87 to 106 (KIRR…AAEK) and 124 to 158 (LDGH…VAGA). The residue at position 146 (Ser-146) is a Phosphoserine. Positions 148–158 (EAEAPGAVAGA) are enriched in low complexity. Positions 185–277 (AVRENYTWSQ…VGEYWWNAIL (93 aa)) constitute a CS domain. Phosphoserine is present on residues Ser-340 and Ser-355.

In Homo sapiens (Human), this protein is NudC domain-containing protein 3 (NUDCD3).